Reading from the N-terminus, the 291-residue chain is MDLKWLQTFIAAAESESFREAAEHLYLTQPAVSQHMRKLEDELDMRLFLHSGRRVVLTDEGRLFLPYAKEMIHVYQAGKQKVSQWKQGYSRSLTLAVHPYIASYILPRFLPAYIQKHPHVELSTHVAGSDAIKQAVEHNEADIGLSRKDPNTNTLYYQHICEGTLCLAAPFQESRPDAASVLTRYRLLTHDHPSYGDAFLDNIRSHYPYLQMMAVGQTDTAVHMMKAGMGASFLPTYIIKQEEAEKKLMAVSTPAHLELPASQTFMMWKRNSEDIQHFHAMLHDFMQREQV.

The region spanning 1–58 is the HTH lysR-type domain; that stretch reads MDLKWLQTFIAAAESESFREAAEHLYLTQPAVSQHMRKLEDELDMRLFLHSGRRVVLT. A DNA-binding region (H-T-H motif) is located at residues 18 to 37; it reads FREAAEHLYLTQPAVSQHMR.

This sequence belongs to the LysR transcriptional regulatory family.

This is an uncharacterized protein from Bacillus subtilis (strain 168).